We begin with the raw amino-acid sequence, 360 residues long: Arginase, non-hepatic 1 (360 aa).

Positions 122, 145, 147, and 149 each coordinate Mn(2+). Residues 147-151 (HADIN), 158-160 (SGN), and D204 contribute to the substrate site. 2 residues coordinate Mn(2+): D253 and D255. Substrate is bound by residues T267 and E298.

The protein belongs to the arginase family. In terms of assembly, homotrimer. It depends on Mn(2+) as a cofactor. As to expression, expressed at differing tadpole stages in tail, intestine, hindlimb and trunk region. Most abundant in tadpole tail.

It catalyses the reaction L-arginine + H2O = urea + L-ornithine. The protein operates within nitrogen metabolism; urea cycle; L-ornithine and urea from L-arginine: step 1/1. Functionally, as well as its role in the urea cycle, may be involved in tissue remodeling. The sequence is that of Arginase, non-hepatic 1 (arg2-a) from Xenopus laevis (African clawed frog).